The following is a 412-amino-acid chain: Alpha-2,8-sialyltransferase 8E (412 aa).

Over 1–16 (MRYADPSANRDLLGNR) the chain is Cytoplasmic. The chain crosses the membrane as a helical; Signal-anchor for type II membrane protein span at residues 17 to 37 (TLLFIFICAFALVTLLQQILY). At 38-412 (SKSYIKRGFQ…RVHTGTCNCC (375 aa)) the chain is on the lumenal side. N-linked (GlcNAc...) asparagine glycosylation is found at Asn58, Asn64, Asn73, and Asn92. 2 disulfides stabilise this stretch: Cys200-Cys349 and Cys214-Cys409. Substrate contacts are provided by residues Asn228 and 250 to 252 (NPS). N-linked (GlcNAc...) asparagine glycosylation is present at Asn277. Residue 336 to 338 (STG) coordinates substrate. Catalysis depends on His384, which acts as the Proton donor/acceptor.

Belongs to the glycosyltransferase 29 family. As to expression, highly expressed in brain. Expressed at low levels in other tissues, including liver, testis, lung, placenta and spleen.

The protein localises to the golgi apparatus membrane. The catalysed reaction is a ganglioside GT1b (d18:1(4E)) + CMP-N-acetyl-beta-neuraminate = a ganglioside GQ1b (d18:1(4E)) + CMP + H(+). It catalyses the reaction a ganglioside GD3 (d18:1(4E)) + CMP-N-acetyl-beta-neuraminate = a ganglioside GT3 (d18:1(4E)) + CMP + H(+). It carries out the reaction a ganglioside GD1a (d18:1(4E)) + CMP-N-acetyl-beta-neuraminate = a ganglioside GT1a (d18:1(4E)) + CMP + H(+). The enzyme catalyses a ganglioside GM1b (d18:1(4E)) + CMP-N-acetyl-beta-neuraminate = a ganglioside GD1c (d18:1(4E)) + CMP + H(+). The catalysed reaction is a ganglioside GQ1c (d18:1(4E)) + CMP-N-acetyl-beta-neuraminate = a ganglioside GP1c (d18:1(4E)) + CMP + H(+). Its pathway is protein modification; protein glycosylation. Involved in the synthesis of gangliosides GD1c, GT1a, GQ1b, GP1c and GT3 from GD1a, GT1b, GM1b and GD3 respectively. This chain is Alpha-2,8-sialyltransferase 8E, found in Mus musculus (Mouse).